The sequence spans 551 residues: MAAPALSWRLPLLILLLPLATSWASAAVNGTSQFTCFYNSRANISCVWSQDGALQDTSCQVHAWPDRRRWNQTCELLPVSQASWACNLILGAPDSQKLTTVDIVTLRVLCREGVRWRVMAIQDFKPFENLRLMAPISLQVVHVETHRCNISWEISQASHYFERHLEFEARTLSPGHTWEEAPLLTLKQKQEWICLETLTPDTQYEFQVRVKPLQGEFTTWSPWSQPLAFRTKPAALGKDTIPWLGHLLVGLSGAFGFIILVYLLINCRNTGPWLKKVLKCNTPDPSKFFSQLSSEHGGDVQKWLSSPFPSSSFSPGGLAPEISPLEVLERDKVTQLLLQQDKVPEPASLSSNHSLTSCFTNQGYFFFHLPDALEIEACQVYFTYDPYSEEDPDEGVAGAPTGSSPQPLQPLSGEDDAYCTFPSRDDLLLFSPSLLGGPSPPSTAPGGSGAGEERMPPSLQERVPRDWDPQPLGPPTPGVPDLVDFQPPPELVLREAGEEVPDAGPREGVSFPWSRPPGQGEFRALNARLPLNTDAYLSLQELQGQDPTHLV.

A signal peptide spans 1-26 (MAAPALSWRLPLLILLLPLATSWASA). At 27-240 (AVNGTSQFTC…TKPAALGKDT (214 aa)) the chain is on the extracellular side. N-linked (GlcNAc...) asparagine glycans are attached at residues Asn-29, Asn-43, and Asn-71. Cystine bridges form between Cys-36/Cys-46, Cys-59/Cys-110, and Cys-74/Cys-86. A Fibronectin type-III domain is found at 134–234 (APISLQVVHV…QPLAFRTKPA (101 aa)). N-linked (GlcNAc...) asparagine glycosylation occurs at Asn-149. Residues 220 to 224 (WSPWS) carry the WSXWS motif motif. Residues 241-265 (IPWLGHLLVGLSGAFGFIILVYLLI) form a helical membrane-spanning segment. At 266–551 (NCRNTGPWLK…LQGQDPTHLV (286 aa)) the chain is on the cytoplasmic side. The Box 1 motif signature appears at 278-286 (LKCNTPDPS). Disordered regions lie at residues 389–416 (EEDPDEGVAGAPTGSSPQPLQPLSGEDD) and 432–486 (PSLL…VDFQ).

The protein belongs to the type I cytokine receptor family. Type 4 subfamily. Non-covalent dimer of an alpha and a beta subunit. IL2R exists in 3 different forms: a high affinity dimer, an intermediate affinity monomer (beta subunit), and a low affinity monomer (alpha subunit). The high and intermediate affinity forms also associate with a gamma subunit. Interacts with SHB upon interleukin stimulation. In terms of assembly, (Microbial infection) Interacts with HTLV-1 accessory protein p12I.

Its subcellular location is the cell membrane. Receptor for interleukin-2. This beta subunit is involved in receptor mediated endocytosis and transduces the mitogenic signals of IL2. Probably in association with IL15RA, involved in the stimulation of neutrophil phagocytosis by IL15. In Homo sapiens (Human), this protein is Interleukin-2 receptor subunit beta.